An 82-amino-acid polypeptide reads, in one-letter code: Sulfur carrier protein TusA (82 aa).

Cysteine 19 (cysteine persulfide intermediate) is an active-site residue.

This sequence belongs to the sulfur carrier protein TusA family. In terms of assembly, interacts with IscS.

It is found in the cytoplasm. It functions in the pathway tRNA modification. Functionally, sulfur carrier protein involved in sulfur trafficking in the cell. Part of a sulfur-relay system required for 2-thiolation during synthesis of 2-thiouridine of the modified wobble base 5-methylaminomethyl-2-thiouridine (mnm(5)s(2)U) in tRNA. Interacts with IscS and stimulates its cysteine desulfurase activity. Accepts an activated sulfur from IscS, which is then transferred to TusD, and thus determines the direction of sulfur flow from IscS to 2-thiouridine formation. Also appears to be involved in sulfur transfer for the biosynthesis of molybdopterin. The polypeptide is Sulfur carrier protein TusA (Edwardsiella ictaluri (strain 93-146)).